The sequence spans 361 residues: Histidine biosynthesis bifunctional protein HisB (361 aa).

The histidinol-phosphatase stretch occupies residues 1-172 (MTQPTLFIDR…PKTTACKRPP (172 aa)). Residue Asp9 is the Nucleophile of the active site. Asp9 and Asp11 together coordinate Mg(2+). Catalysis depends on Asp11, which acts as the Proton donor. Positions 92, 94, 100, and 102 each coordinate Zn(2+). Mg(2+) is bound at residue Asp129. Positions 173 to 361 (RYAEVVRTTK…NELPSSKGVL (189 aa)) are imidazoleglycerol-phosphate dehydratase.

In the N-terminal section; belongs to the histidinol-phosphatase family. The protein in the C-terminal section; belongs to the imidazoleglycerol-phosphate dehydratase family. It depends on Mg(2+) as a cofactor. The cofactor is Zn(2+).

It localises to the cytoplasm. It carries out the reaction D-erythro-1-(imidazol-4-yl)glycerol 3-phosphate = 3-(imidazol-4-yl)-2-oxopropyl phosphate + H2O. It catalyses the reaction L-histidinol phosphate + H2O = L-histidinol + phosphate. The protein operates within amino-acid biosynthesis; L-histidine biosynthesis; L-histidine from 5-phospho-alpha-D-ribose 1-diphosphate: step 6/9. It participates in amino-acid biosynthesis; L-histidine biosynthesis; L-histidine from 5-phospho-alpha-D-ribose 1-diphosphate: step 8/9. The polypeptide is Histidine biosynthesis bifunctional protein HisB (Actinobacillus pleuropneumoniae serotype 3 (strain JL03)).